Here is a 59-residue protein sequence, read N- to C-terminus: UPF0434 protein VV1_2087 (59 aa).

The protein belongs to the UPF0434 family.

The polypeptide is UPF0434 protein VV1_2087 (Vibrio vulnificus (strain CMCP6)).